The chain runs to 250 residues: DNA repair protein RecO (250 aa).

This sequence belongs to the RecO family.

Involved in DNA repair and RecF pathway recombination. The chain is DNA repair protein RecO from Beijerinckia indica subsp. indica (strain ATCC 9039 / DSM 1715 / NCIMB 8712).